The sequence spans 92 residues: MARVTVEDAVDQIGNRFDMILVAARRARQIAVQGKDPMVDEMNDKPTVIALREIELGLVNATTLDADERQTVRDREAAEVAAVSAIAEGRTL.

This sequence belongs to the RNA polymerase subunit omega family. The RNAP catalytic core consists of 2 alpha, 1 beta, 1 beta' and 1 omega subunit. When a sigma factor is associated with the core the holoenzyme is formed, which can initiate transcription.

The catalysed reaction is RNA(n) + a ribonucleoside 5'-triphosphate = RNA(n+1) + diphosphate. Its function is as follows. Promotes RNA polymerase assembly. Latches the N- and C-terminal regions of the beta' subunit thereby facilitating its interaction with the beta and alpha subunits. This is DNA-directed RNA polymerase subunit omega from Shewanella denitrificans (strain OS217 / ATCC BAA-1090 / DSM 15013).